The sequence spans 2515 residues: Polyprotein P1234 (2515 aa).

The Alphavirus-like MT domain occupies 30 to 260 (VAQQATPNDH…EHRASLQSWH (231 aa)). The nsP1 membrane-binding stretch occupies residues 245-264 (GSTLYPEHRASLQSWHLPSV). The S-palmitoyl cysteine; by host moiety is linked to residue C420. Positions 695–850 (ELTNPPYHEL…RDICTKTFYK (156 aa)) constitute a (+)RNA virus helicase ATP-binding domain. 726–733 (GTPGSGKS) lines the a ribonucleoside 5'-triphosphate pocket. Residues 851–999 (FISRRCTQPV…IEDWEAEHKG (149 aa)) form the (+)RNA virus helicase C-terminal domain. Residues 1012–1341 (NPFSCKTNVC…CVISSVYEGT (330 aa)) form the Peptidase C9 domain. The nucleolus localization signal stretch occupies residues 1013 to 1032 (PFSCKTNVCWAKALEPILAT). C1021 (for cysteine protease nsP2 activity) is an active-site residue. Residues 1066–1075 (IKFFGMDLTS) carry the Nuclear export signal motif. H1098 acts as the For cysteine protease nsP2 activity in catalysis. Residues 1196 to 1200 (PHKRI) carry the Nuclear localization signal motif. Positions 1348-1507 (APSYRTKREN…RIDAVLQLKE (160 aa)) constitute a Macro domain. Residues N1371, G1379, G1459, I1460, and Y1461 each contribute to the ADP-D-ribose site. C1610, C1612, C1635, and C1653 together coordinate Zn(2+). Disordered stretches follow at residues 1678 to 1705 (QPAA…DNTS) and 1777 to 1797 (LAAA…SSAD). 2 short sequence motifs (FGDF; binding to host G3BP1) span residues 1839–1842 (FGSF) and 1862–1865 (FGSF). Positions 2269–2384 (DPVLETDIAS…HGVVSDKEMA (116 aa)) constitute a RdRp catalytic domain.

Interacts with non-structural protein 3. Interacts with RNA-directed RNA polymerase nsP4. Interacts with protease nsP2. interacts with itself. As to quaternary structure, interacts with mRNA-capping enzyme nsP1. Interacts with host DDX1. Interacts with host DDX3. Interacts (via C-terminus) with host G3BP1; this interaction inhibits the formation of host stress granules on viral mRNAs and the nsp3-G3BP1 complexes bind viral RNAs and probably orchestrate the assembly of viral replication complexes. Interacts (via C-terminus) with host G3BP2; this interaction inhibits the formation of host stress granules on viral mRNAs and the nsp3-G3BP2 complexes bind viral RNAs and probably orchestrate the assembly of viral replication complexes. In terms of assembly, interacts with mRNA-capping enzyme nsP1. Interacts with protease nsP2. interacts with itself. Interacts with RNA-directed RNA polymerase nsP4. Interacts with mRNA-capping enzyme nsP1. Interacts with KPNA1/karyopherin-alpha1; this interaction probably allows the active transport of protease nsP2 into the host nucleus. Requires Mg(2+) as cofactor. Mn(2+) is required as a cofactor. Post-translationally, specific enzymatic cleavages in vivo yield mature proteins. The processing of the polyprotein is temporally regulated. In early stages (1.7 hpi), P1234 is first cleaved in trans through its nsP2 protease activity, releasing P123' and nsP4, which associate to form the early replication complex. At the same time, P1234 is also cut at the nsP1/nsP2 site early in infection but with lower efficiency. After replication of the viral minus-strand RNAs (4 hpi), the polyproteins are cut at the nsP1/nsP2 and nsP2/nsP3 sites very efficiently, preventing accumulation of P123' and P1234 and allowing the formation of the late replication complex. NsP3'/nsP4 site is not cleaved anymore and P34 is produced rather than nsP4. In terms of processing, specific enzymatic cleavages in vivo yield mature proteins. The processing of the polyprotein is temporally regulated. In early stages (1.7 hpi), P123 is cleaved at the nsP1/nsP2 site with low efficiency. After replication of the viral minus-strand RNAs (4 hpi), the polyproteins are cut at the nsP1/nsP2 and nsP2/nsP3 sites very efficiently, preventing accumulation of P123 and allowing the formation of the late replication complex. Specific enzymatic cleavages in vivo yield mature proteins. The processing of the polyprotein is temporally regulated. In early stages (1.7 hpi), P123' is cleaved at the nsP1/nsP2 site with low efficiency. After replication of the viral minus-strand RNAs (4 hpi), the polyproteins are cut at the nsP1/nsP2 and nsP2/nsP3 sites very efficiently, preventing accumulation of P123' and allowing the formation of the late replication complex. Post-translationally, palmitoylated by host palmitoyltransferases ZDHHC2 and ZDHHC19. In terms of processing, phosphorylated by host on serines and threonines. Ubiquitinated; targets the protein for rapid degradation via the ubiquitin system. Nsp4 is present in extremely low quantities due to low frequency of translation through the amber stop-codon and the degradation by the ubiquitin pathway.

The protein resides in the host cytoplasmic vesicle membrane. The protein localises to the host cell membrane. Its subcellular location is the host cell projection. It localises to the host filopodium. It is found in the host nucleus. The protein resides in the host cytoplasm. It carries out the reaction GTP + S-adenosyl-L-methionine = N(7)-methyl-GTP + S-adenosyl-L-homocysteine. It catalyses the reaction N(7)-methyl-GTP + L-histidyl-[protein] = N(tele)-(N(7)-methylguanosine 5'-phospho)-L-histidyl-[protein] + diphosphate. The catalysed reaction is N(tele)-(N(7)-methylguanosine 5'-phospho)-L-histidyl-[protein] + a 5'-end diphospho-(purine-ribonucleoside) in mRNA + H(+) = a 5'-end (N(7)-methyl 5'-triphosphoguanosine)-(purine-ribonucleoside) in mRNA + L-histidyl-[protein]. The enzyme catalyses a 5'-end triphospho-ribonucleoside in mRNA + H2O = a 5'-end diphospho-ribonucleoside in mRNA + phosphate + H(+). It carries out the reaction a ribonucleoside 5'-triphosphate + H2O = a ribonucleoside 5'-diphosphate + phosphate + H(+). It catalyses the reaction ATP + H2O = ADP + phosphate + H(+). The catalysed reaction is RNA(n) + a ribonucleoside 5'-triphosphate = RNA(n+1) + diphosphate. The enzyme catalyses RNA(n) + ATP = RNA(n)-3'-adenine ribonucleotide + diphosphate. It carries out the reaction 4-O-(ADP-D-ribosyl)-L-aspartyl-[protein] + H2O = L-aspartyl-[protein] + ADP-D-ribose + H(+). It catalyses the reaction 5-O-(ADP-D-ribosyl)-L-glutamyl-[protein] + H2O = L-glutamyl-[protein] + ADP-D-ribose + H(+). The catalysed reaction is ADP-alpha-D-ribose 1''-phosphate + H2O = ADP-D-ribose + phosphate. Inactive precursor of the viral replicase, which is activated by cleavages carried out by the viral protease nsP2. Its function is as follows. The early replication complex formed by the polyprotein P123 and nsP4 synthesizes minus-strand RNAs. As soon P123 is cleaved into mature proteins, the plus-strand RNAs synthesis begins. In terms of biological role, the early replication complex formed by the polyprotein P123' and nsP4 synthesizes minus-strand RNAs. Polyprotein P123' is a short-lived polyprotein that accumulates during early stage of infection. As soon P123' is cleaved into mature proteins, the plus-strand RNAs synthesis begins. Functionally, cytoplasmic capping enzyme that catalyzes two virus-specific reactions: methyltransferase and nsP1 guanylyltransferase. mRNA-capping is necessary since all viral RNAs are synthesized in the cytoplasm, and host capping enzymes are restricted to the nucleus. The enzymatic reaction involves a covalent link between 7-methyl-GMP and nsP1, whereas eukaryotic capping enzymes form a covalent complex only with GMP. nsP1 capping consists in the following reactions: GTP is first methylated into 7-methyl-GMP and then is covalently linked to nsP1 to form the m7GMp-nsP1 complex from which 7-methyl-GMP complex is transferred to the mRNA to create the cap structure. NsP1 is needed for the initiation of the minus-strand RNAs synthesis. Probably serves as a membrane anchor for the replication complex composed of nsP1-nsP4. Palmitoylated nsP1 is remodeling host cell cytoskeleton, and induces filopodium-like structure formation at the surface of the host cell. Interacts with host TMEM45B; this interaction leads to viral replication inhibition. Multifunctional protein whose N-terminus is part of the RNA polymerase complex and displays NTPase, RNA triphosphatase and helicase activities. NTPase and RNA triphosphatase are involved in viral RNA capping and helicase keeps a check on the dsRNA replication intermediates. The C-terminus harbors a protease that specifically cleaves the polyproteins and releases the mature proteins. Required for the shutoff of minus-strand RNAs synthesis. Specifically inhibits the host IFN response by promoting the nuclear export of host STAT1. Also inhibits host transcription by inducing rapid proteasome-dependent degradation of POLR2A, a catalytic subunit of the RNAPII complex. The resulting inhibition of cellular protein synthesis serves to ensure maximal viral gene expression and to evade host immune response. Its function is as follows. Seems to be essential for minus-strand RNAs and subgenomic 26S mRNAs synthesis. Displays mono-ADP-ribosylhydrolase activity. ADP-ribosylation is a post-translational modification that controls various processes of the host cell and the virus probably needs to revert it for optimal viral replication. Binds proteins of FXR family and sequesters them into the viral RNA replication complexes thereby inhibiting the formation of host stress granules on viral mRNAs. The nsp3'-FXR complexes bind viral RNAs and probably orchestrate the assembly of viral replication complexes, thanks to the ability of FXR family members to self-assemble and bind DNA. In terms of biological role, seems to be essential for minus-strand RNAs and subgenomic 26S mRNAs synthesis. Displays mono-ADP-ribosylhydrolase activity. ADP-ribosylation is a post-translantional modification that controls various processes of the host cell and the virus probably needs to revert it for optimal viral replication. Binds proteins of G3BP family and sequesters them into the viral RNA replication complexes thereby inhibiting the formation of host stress granules on viral mRNAs. The nsp3-G3BP complexes bind viral RNAs and probably orchestrate the assembly of viral replication complexes, thanks to the ability of G3BP family members to self-assemble and bind DNA. Functionally, RNA dependent RNA polymerase. Replicates genomic and antigenomic RNA by recognizing replications specific signals. The early replication complex formed by the polyprotein P123 and nsP4 synthesizes minus-strand RNAs. The late replication complex composed of fully processed nsP1-nsP4 is responsible for the production of genomic and subgenomic plus-strand RNAs. The core catalytic domain of nsP4 also possesses terminal adenylyltransferase (TATase) activity that is probably involved in maintenance and repair of the poly(A) tail, an element required for replication of the viral genome. Interacts with host TMEM45B; this interaction leads to viral replication inhibition. This chain is Polyprotein P1234, found in Acrocephalus scirpaceus (Eurasian reed-warbler).